Consider the following 67-residue polypeptide: MSVEEKLNQAKGSIKEGVGKAIGDEKMEKEGAAEKVVSKVKEVAEDAKDAVEGAVEGVKNMLSGDDK.

The segment at 1-30 (MSVEEKLNQAKGSIKEGVGKAIGDEKMEKE) is disordered.

Belongs to the UPF0337 (CsbD) family.

This chain is UPF0337 protein SP_1805, found in Streptococcus pneumoniae serotype 4 (strain ATCC BAA-334 / TIGR4).